The following is a 134-amino-acid chain: Small ribosomal subunit protein uS8 (134 aa).

Belongs to the universal ribosomal protein uS8 family. Part of the 30S ribosomal subunit. Contacts proteins S5 and S12.

In terms of biological role, one of the primary rRNA binding proteins, it binds directly to 16S rRNA central domain where it helps coordinate assembly of the platform of the 30S subunit. This chain is Small ribosomal subunit protein uS8, found in Kosmotoga olearia (strain ATCC BAA-1733 / DSM 21960 / TBF 19.5.1).